A 114-amino-acid chain; its full sequence is Eukaryotic translation initiation factor 6 (114 aa).

It belongs to the eIF-6 family. In terms of assembly, monomer. Associates with the 60S ribosomal subunit.

It localises to the cytoplasm. It is found in the nucleus. The protein resides in the nucleolus. In terms of biological role, binds to the 60S ribosomal subunit and prevents its association with the 40S ribosomal subunit to form the 80S initiation complex in the cytoplasm. May also be involved in ribosome biogenesis. This is Eukaryotic translation initiation factor 6 from Trypanosoma cruzi.